Here is a 494-residue protein sequence, read N- to C-terminus: MRRVALSVLFQSSRVLHFTDLRDKQIALCNAAPGHTVQFHQHRRHSSAPVSSVGGQNTFSCLGASCAGLLHPSRVRFANRRRSGSTSKKAQVKSSVNQLAIPSAATRERRKPKLSNSCAPAVESQKVGVAPTTSRASGETRTSCAPPPASRMKPSFYVVAVGRQRGIYSTWDQCSEQVKGFSGAVYKSFRTLSEARAYLTAHPARSGLEKSDRGDGAASLSALSEPQVGLRRSRAAEAEASYVVEAPAQPTLRQRVEEEVPSGAAAVQRAESSVPQVVYVDGACSHNGTPKARAGYGGFYGSTSDSRNFSLPVPITEAQTNNRGEMRAVIHCIVQGFVDAGVPPAALGTSHCVEPDWELSELPQPLRRLVIYTDSRYVIDGLTRYALKWVANGFKLASKEPVLNQDLWRQLIRLRDAYNTRYAEQQHWAAATCSHASTRVPAASQSKRFHTHNTRNDETEGIELRHVKGHSNDYGNEMADVLAVAGARMHGTSE.

Disordered regions lie at residues 79 to 148 (NRRR…APPP) and 205 to 231 (RSGL…VGLR). Polar residues-rich tracts occupy residues 84-100 (GSTS…NQLA) and 131-143 (PTTS…TRTS). The 217-residue stretch at 272–488 (SSVPQVVYVD…ADVLAVAGAR (217 aa)) folds into the RNase H type-1 domain. Aspartate 281, glutamate 325, aspartate 374, and aspartate 480 together coordinate Mg(2+).

It belongs to the RNase H family. Monomer. Mg(2+) serves as cofactor.

It carries out the reaction Endonucleolytic cleavage to 5'-phosphomonoester.. Its function is as follows. Endonuclease that specifically degrades the RNA of RNA-DNA hybrids. The polypeptide is Ribonuclease H (RNH1) (Crithidia fasciculata).